The following is a 371-amino-acid chain: Aspartate-semialdehyde dehydrogenase (371 aa).

Residues 10–13 (RGMV), 37–38 (TS), and Q74 each bind NADP(+). R103 contacts phosphate. C136 acts as the Acyl-thioester intermediate in catalysis. Residue Q163 coordinates substrate. S166 is an NADP(+) binding site. E243 contacts substrate. Position 246 (K246) interacts with phosphate. R270 serves as a coordination point for substrate. H277 functions as the Proton acceptor in the catalytic mechanism. Q353 serves as a coordination point for NADP(+).

Belongs to the aspartate-semialdehyde dehydrogenase family. In terms of assembly, homodimer.

The catalysed reaction is L-aspartate 4-semialdehyde + phosphate + NADP(+) = 4-phospho-L-aspartate + NADPH + H(+). It functions in the pathway amino-acid biosynthesis; L-lysine biosynthesis via DAP pathway; (S)-tetrahydrodipicolinate from L-aspartate: step 2/4. Its pathway is amino-acid biosynthesis; L-methionine biosynthesis via de novo pathway; L-homoserine from L-aspartate: step 2/3. The protein operates within amino-acid biosynthesis; L-threonine biosynthesis; L-threonine from L-aspartate: step 2/5. Its function is as follows. Catalyzes the NADPH-dependent formation of L-aspartate-semialdehyde (L-ASA) by the reductive dephosphorylation of L-aspartyl-4-phosphate. The polypeptide is Aspartate-semialdehyde dehydrogenase (Haemophilus influenzae (strain ATCC 51907 / DSM 11121 / KW20 / Rd)).